The chain runs to 579 residues: Glutamine--tRNA ligase (579 aa).

The 'HIGH' region signature appears at 41 to 51; the sequence is PEPNGYLHIGH. ATP contacts are provided by residues 42 to 44 and 48 to 54; these read EPN and HIGHAKA. Positions 74 and 218 each coordinate L-glutamine. Residues Thr-237, 285-286, and 293-295 each bind ATP; these read RL and MSK. The 'KMSKS' region motif lies at 292 to 296; the sequence is VMSKR.

This sequence belongs to the class-I aminoacyl-tRNA synthetase family. Monomer.

It localises to the cytoplasm. It catalyses the reaction tRNA(Gln) + L-glutamine + ATP = L-glutaminyl-tRNA(Gln) + AMP + diphosphate. The protein is Glutamine--tRNA ligase of Xanthomonas axonopodis pv. citri (strain 306).